The following is a 79-amino-acid chain: UPF0181 protein PC1_1931 (79 aa).

Residues 54-79 are disordered; sequence FDEDDDTVNDSDEEHYFDDGEEEDEQ.

This sequence belongs to the UPF0181 family.

This is UPF0181 protein PC1_1931 from Pectobacterium carotovorum subsp. carotovorum (strain PC1).